We begin with the raw amino-acid sequence, 453 residues long: Pup--protein ligase (453 aa).

Residue E9 participates in Mg(2+) binding. Residue R53 participates in ATP binding. A Mg(2+)-binding site is contributed by Y55. The active-site Proton acceptor is the D57. E63 is a Mg(2+) binding site. ATP-binding residues include T66 and W420.

The protein belongs to the Pup ligase/Pup deamidase family. Pup-conjugating enzyme subfamily.

The catalysed reaction is ATP + [prokaryotic ubiquitin-like protein]-L-glutamate + [protein]-L-lysine = ADP + phosphate + N(6)-([prokaryotic ubiquitin-like protein]-gamma-L-glutamyl)-[protein]-L-lysine.. Its pathway is protein degradation; proteasomal Pup-dependent pathway. The protein operates within protein modification; protein pupylation. Its function is as follows. Catalyzes the covalent attachment of the prokaryotic ubiquitin-like protein modifier Pup to the proteasomal substrate proteins, thereby targeting them for proteasomal degradation. This tagging system is termed pupylation. The ligation reaction involves the side-chain carboxylate of the C-terminal glutamate of Pup and the side-chain amino group of a substrate lysine. This Kribbella flavida (strain DSM 17836 / JCM 10339 / NBRC 14399) protein is Pup--protein ligase.